The chain runs to 440 residues: Tetratricopeptide repeat protein 5 (440 aa).

TPR repeat units follow at residues 7–61 (EEVK…EEVV), 68–98 (AQVL…AVKL), 103–130 (VEAW…SGAL), 136–174 (KVSL…AVQM), and 179–216 (GRSW…AEKV). Residues 13–24 (LQKLQELVDQLY) carry the Nuclear export signal motif. Ser-203 is subject to Phosphoserine; by ATM. The residue at position 221 (Ser-221) is a Phosphoserine; by CHEK2. The TPR 6 repeat unit spans residues 224 to 253 (PDLHLNRATLHKYEENYGEALEGFSRAAAL). Positions 285–287 (KTK) are mediates interaction with 28S rRNA of ribosome-coding tubulin.

Interacts with JMY and p300/EP300; the interaction occurs in the nucleus and augments the association between JMY and p300/EP300 in response to DNA damage. Interacts with PRMT5; the interaction is DNA damage-dependent and promotes PRMT5 interaction with p53/TP53 and subsequent methylation. Forms a complex with HSF1 and p300/EP300; these interactions augment chromatin-bound HSF1 and p300/EP300 histone acetyltransferase activity, resulting in enhanced heat-shock-responsive transcription. Interacts with JMY; the interaction occurs in the cytoplasm and results in the inhibition of JYM's nucleation activity. Interacts with ribosome-coding tubulin (via 60S subunit 28S rRNA and protein uL24/RPL26) and the N-terminal of nascent tubulin polypeptide (via alpha-tubulin MREC motif and beta-tubulin MREI motif); these interactions result in tubulin mRNA-targeted degradation. Interacts with ATP5F1B; the interaction occurs in the mitochondria and results in ATP production decrease. Interacts with p53/TP53; the interaction occurs in the mitochondria and results in increased apoptosis. In terms of processing, phosphorylation by ATM kinase induces nuclear accumulation while interfering with nuclear export, and phosphorylation by CHEK2 kinase enhances nuclear stability.

It is found in the nucleus. It localises to the cytoplasm. The protein localises to the cytoplasmic vesicle. The protein resides in the mitochondrion matrix. Cofactor involved in the regulation of various cellular mechanisms such as actin regulation, autophagy, chromatin regulation and DNA repair. In physiological conditions, interacts with cofactor JMY in the cytoplasm which prevents JMY's actin nucleation activity and ability to activate the Arp2/3 complex. Acts as a negative regulator of nutrient stress-induced autophagy by inhibiting JMY's interaction with MAP1LC3B, thereby preventing autophagosome formation. Involves in tubulin autoregulation by promoting its degradation in response to excess soluble tubulin. To do so, associates with the active ribosome near the ribosome exit tunnel and with nascent tubulin polypeptides early during their translation, triggering tubulin mRNA-targeted degradation. Following DNA damage, phosphorylated by DNA damage responsive protein kinases ATM and CHEK2, leading to its nuclear accumulation and stability. Nuclear TTC5/STRAP promotes the assembly of a stress-responsive p53/TP53 coactivator complex, which includes the coactivators JMY and p300, thereby increasing p53/TP53-dependent transcription and apoptosis. Also recruits arginine methyltransferase PRMT5 to p53/TP53 when DNA is damaged, allowing PRMT5 to methylate p53/TP53. In DNA stress conditions, also prevents p53/TP53 degradation by E3 ubiquitin ligase MDM2. Upon heat-shock stress, forms a chromatin-associated complex with heat-shock factor 1 HSF1 and p300/EP300 to stimulate heat-shock-responsive transcription, thereby increasing cell survival. Mitochondrial TTC5/STRAP interacts with ATP synthase subunit beta ATP5F1B which decreased ATP synthase activity and lowers mitochondrial ATP production, thereby regulating cellular respiration and mitochondrial-dependent apoptosis. Mitochondrial TTC5/STRAP also regulates p53/TP53-mediated apoptosis. The protein is Tetratricopeptide repeat protein 5 (TTC5) of Bos taurus (Bovine).